Here is a 146-residue protein sequence, read N- to C-terminus: Small ribosomal subunit protein uS5 (146 aa).

Residues 8–71 (FSEVVVNIGR…DDAFKNIIKV (64 aa)) form the S5 DRBM domain.

Belongs to the universal ribosomal protein uS5 family. In terms of assembly, part of the 30S ribosomal subunit. Contacts proteins S4 and S8.

With S4 and S12 plays an important role in translational accuracy. In terms of biological role, located at the back of the 30S subunit body where it stabilizes the conformation of the head with respect to the body. In Helicobacter hepaticus (strain ATCC 51449 / 3B1), this protein is Small ribosomal subunit protein uS5.